Here is a 210-residue protein sequence, read N- to C-terminus: Guanylate kinase (210 aa).

One can recognise a Guanylate kinase-like domain in the interval 6-184; sequence GTLYIISAPS…ALQDLKCIIQ (179 aa). 13-20 is a binding site for ATP; the sequence is APSGAGKT.

Belongs to the guanylate kinase family.

It localises to the cytoplasm. The enzyme catalyses GMP + ATP = GDP + ADP. Its function is as follows. Essential for recycling GMP and indirectly, cGMP. This Nitrosospira multiformis (strain ATCC 25196 / NCIMB 11849 / C 71) protein is Guanylate kinase.